The chain runs to 235 residues: MRPSGRNNDQLRNLKVTHNFTKHAEGSVLIEFGDTKVICTASVVAGVPEFKKDSGEGWLTAEYGMLPRSTHTRMDREAARGKQSGRTQEIQRLIGRALRASVDLTAIGENTIKVDCDVIQADGGTRTASITGASLAIADAIEYMKQNGMLDEQANPLLSQVAAISVGIYNNEPVLDLDYDEDSNAETDMNVVMNSNGGIIEIQGTAEGKDFSEEEFAKMLGLAKKGIKEIFATVF.

Phosphate is bound by residues arginine 86 and 124-126 (GTR).

Belongs to the RNase PH family. As to quaternary structure, homohexameric ring arranged as a trimer of dimers.

It catalyses the reaction tRNA(n+1) + phosphate = tRNA(n) + a ribonucleoside 5'-diphosphate. In terms of biological role, phosphorolytic 3'-5' exoribonuclease that plays an important role in tRNA 3'-end maturation. Removes nucleotide residues following the 3'-CCA terminus of tRNAs; can also add nucleotides to the ends of RNA molecules by using nucleoside diphosphates as substrates, but this may not be physiologically important. Probably plays a role in initiation of 16S rRNA degradation (leading to ribosome degradation) during starvation. The sequence is that of Ribonuclease PH from Francisella tularensis subsp. novicida (strain U112).